A 208-amino-acid chain; its full sequence is Probable GTP-binding protein EngB (208 aa).

The EngB-type G domain maps to 25–199 (TGIEVAFAGR…RQKLDSWYNG (175 aa)). GTP contacts are provided by residues 33–40 (GRSNAGKS), 60–64 (GRTQL), 78–81 (DLPG), 145–148 (TKSD), and 178–180 (FSS). Positions 40 and 62 each coordinate Mg(2+).

It belongs to the TRAFAC class TrmE-Era-EngA-EngB-Septin-like GTPase superfamily. EngB GTPase family. The cofactor is Mg(2+).

Necessary for normal cell division and for the maintenance of normal septation. This is Probable GTP-binding protein EngB from Enterobacter sp. (strain 638).